The following is a 21-amino-acid chain: Chlorophyllase type 2 (21 aa).

This sequence belongs to the AB hydrolase superfamily. Lipase family.

The enzyme catalyses a chlorophyll + H2O = a chlorophyllide + phytol + H(+). The protein operates within porphyrin-containing compound metabolism; chlorophyll degradation. Its function is as follows. Catalyzes the hydrolysis of ester bond in chlorophyll to yield chlorophyllide and phytol. The sequence is that of Chlorophyllase type 2 from Chenopodium album (Fat hen).